The primary structure comprises 604 residues: NADP-dependent malic enzyme, mitochondrial (604 aa).

The segment at 29-50 is disordered; that stretch reads APAQGCHSKPGPARPVPLKKRG. Tyr137 serves as the catalytic Proton donor. Arg190 provides a ligand contact to NAD(+). Lys208 (proton acceptor) is an active-site residue. Residues Glu280, Asp281, and Asp304 each coordinate a divalent metal cation. Asp304 is a binding site for NAD(+). At Ser371 the chain carries Phosphoserine. Asn443 lines the NAD(+) pocket.

The protein belongs to the malic enzymes family. Mg(2+) is required as a cofactor. It depends on Mn(2+) as a cofactor. Expressed predominantly in organs with a low-division rate.

The protein resides in the mitochondrion matrix. The enzyme catalyses (S)-malate + NADP(+) = pyruvate + CO2 + NADPH. The catalysed reaction is oxaloacetate + H(+) = pyruvate + CO2. Functionally, catalyzes the oxidative decarboxylation of (S)-malate to pyruvate using NADP(+) as a cofactor. Can also reverse the decarboxylation reaction, but only with significantly lower efficiency. In Homo sapiens (Human), this protein is NADP-dependent malic enzyme, mitochondrial.